The sequence spans 303 residues: Exosome complex component RRP4 homolog (303 aa).

The KH domain occupies 175–213 (GILIKVPPHLIKKSKKHFHTLPYGMAVIIGCNGSVWVTP).

This sequence belongs to the RRP4 family. As to quaternary structure, component of the RNA exosome complex. As to expression, ubiquitously expressed.

It is found in the nucleus. Its subcellular location is the nucleolus. The protein resides in the nucleoplasm. Functionally, non-catalytic component of the RNA exosome complex which has 3'-&gt;5' exoribonuclease activity and participates in a multitude of cellular RNA processing and degradation events. Involved in regulation of antisense ribosomal siRNA production. Involved in response to cold-warm shock. The chain is Exosome complex component RRP4 homolog from Caenorhabditis elegans.